Consider the following 270-residue polypeptide: Tetraspanin-17 (270 aa).

Residues 1 to 19 (MPGKHQHFQEPEVGCCGKY) lie on the Cytoplasmic side of the membrane. A helical transmembrane segment spans residues 20–40 (FLFGFNIVFWVLGALFLAIGL). The Extracellular portion of the chain corresponds to 41–63 (WAWSEKGVLSNISALTDLGGLDP). Asn51 carries an N-linked (GlcNAc...) asparagine glycan. The helical transmembrane segment at 64 to 84 (VWLFVVVGGVMSVLGFAGCIG) threads the bilayer. Residues 85-94 (ALRENTFLLK) are Cytoplasmic-facing. A helical membrane pass occupies residues 95–115 (FFSVFLGLIFFLELATGILAF). Residues 116 to 234 (VFKDWIRDQL…GQFEKWLQDN (119 aa)) are Extracellular-facing. Cystine bridges form between Cys155-Cys223, Cys156-Cys188, Cys172-Cys182, and Cys189-Cys202. Asn171 carries N-linked (GlcNAc...) asparagine glycosylation. The helical transmembrane segment at 235–255 (LIVVAGVFVGIALLQIFGICL) threads the bilayer. Residues 256 to 270 (AQNLVSDIKAVKANW) are Cytoplasmic-facing.

The protein belongs to the tetraspanin (TM4SF) family. In terms of assembly, interacts with ADAM10; the interaction influences ADAM10 substrate specificity, endocytosis and turnover.

It localises to the cell membrane. Part of TspanC8 subgroup, composed of 6 members that interact with the transmembrane metalloprotease ADAM10. This interaction is required for ADAM10 exit from the endoplasmic reticulum and for enzymatic maturation and trafficking to the cell surface as well as substrate specificity. Different TspanC8/ADAM10 complexes have distinct substrates. Seems to regulate VE-cadherin expression in endothelial cells probably through interaction with ADAM10, promoting leukocyte transmigration. In Bos taurus (Bovine), this protein is Tetraspanin-17 (TSPAN17).